A 52-amino-acid polypeptide reads, in one-letter code: MVEVEKKKITLSIPVETNGKLEELAQKYGMTKSGLVNFLVNQVAEAGTIYRQ.

Residues 20 to 40 (KLEELAQKYGMTKSGLVNFLV) constitute a DNA-binding region (H-T-H motif).

This sequence belongs to the transcriptional regulatory CopG/NikR family. As to quaternary structure, homodimer.

Functionally, regulates the plasmid copy number. RepA binds to the repAB promoter thus controlling the synthesis of the plasmid replication initiator protein RepB. This Lactiplantibacillus plantarum (Lactobacillus plantarum) protein is Protein RepA (repA).